Consider the following 432-residue polypeptide: D-amino acid dehydrogenase (432 aa).

3-17 (VVILGSGVVGVASAW) provides a ligand contact to FAD.

This sequence belongs to the DadA oxidoreductase family. It depends on FAD as a cofactor.

The catalysed reaction is a D-alpha-amino acid + A + H2O = a 2-oxocarboxylate + AH2 + NH4(+). It participates in amino-acid degradation; D-alanine degradation; NH(3) and pyruvate from D-alanine: step 1/1. Functionally, oxidative deamination of D-amino acids. The sequence is that of D-amino acid dehydrogenase from Escherichia coli O127:H6 (strain E2348/69 / EPEC).